A 204-amino-acid chain; its full sequence is High frequency lysogenization protein HflD homolog (204 aa).

It belongs to the HflD family.

It is found in the cytoplasm. The protein resides in the cell inner membrane. The chain is High frequency lysogenization protein HflD homolog from Stenotrophomonas maltophilia (strain R551-3).